Here is a 340-residue protein sequence, read N- to C-terminus: Putative phosphatidylcholine:ceramide cholinephosphotransferase 3 (340 aa).

The segment at 1-25 is disordered; the sequence is MGSVSKTVISARGASPDDEQNGTKN. 4 helical membrane-spanning segments follow: residues 36–56, 81–101, 178–198, and 202–222; these read CIFL…VLAY, SSLG…LLVI, LLFS…AYYL, and IKPL…CMTI. Residue H183 is part of the active site. The Cytoplasmic portion of the chain corresponds to 223–340; that stretch reads SRTHYTIDVV…SSSSTYPLPC (118 aa). Residues H226 and D230 contribute to the active site. Residues 294–313 form a disordered region; sequence STPRGQERGGASAESSDSSV.

Belongs to the sphingomyelin synthase family.

It localises to the membrane. It catalyses the reaction an N-acyl-sphingoid base + a 1,2-diacyl-sn-glycero-3-phosphocholine = an N-(acyl)-sphingosylphosphocholine + a 1,2-diacyl-sn-glycerol. The enzyme catalyses an N-acylsphing-4-enine + a 1,2-diacyl-sn-glycero-3-phosphocholine = a sphingomyelin + a 1,2-diacyl-sn-glycerol. It carries out the reaction an N-acyl-15-methylhexadecasphing-4-enine + a 1,2-diacyl-sn-glycero-3-phosphocholine = an N-acyl-15-methylhexadecasphing-4-enine-1-phosphocholine + a 1,2-diacyl-sn-glycerol. It participates in lipid metabolism; sphingolipid metabolism. Functionally, bidirectional lipid cholinephosphotransferase capable of converting phosphatidylcholine (PC) and ceramide to sphingomyelin (SM) and diacylglycerol (DAG) and vice versa. Direction is dependent on the relative concentrations of DAG and ceramide as phosphocholine acceptors. Directly and specifically recognizes the choline head group on the substrate. Also requires two fatty chains on the choline-P donor molecule in order to be recognized efficiently as a substrate. Does not function strictly as a SM synthase. C.elegans contains specific sphingoid bases, which are unique or different in structure compared to the sphingoid bases found in other animals. Two examples of these distinctive compounds are: 15-methylhexadecasphinganine and 15-methylhexadecasphing-4-enine. The polypeptide is Putative phosphatidylcholine:ceramide cholinephosphotransferase 3 (sms-3) (Caenorhabditis elegans).